Reading from the N-terminus, the 317-residue chain is L-lactate dehydrogenase (317 aa).

NAD(+) contacts are provided by residues Val17, Asp38, Lys43, and 82 to 83 (GA). Residues Gln85, Arg91, and 123-126 (NPVD) each bind substrate. Residues 121–123 (VAN) and Ser146 each bind NAD(+). Position 151 to 154 (151 to 154 (DSAR)) interacts with substrate. Arg156 and His171 together coordinate beta-D-fructose 1,6-bisphosphate. His178 (proton acceptor) is an active-site residue. At Tyr224 the chain carries Phosphotyrosine. Residue Thr233 participates in substrate binding.

The protein belongs to the LDH/MDH superfamily. LDH family. In terms of assembly, homotetramer.

It is found in the cytoplasm. It carries out the reaction (S)-lactate + NAD(+) = pyruvate + NADH + H(+). Its pathway is fermentation; pyruvate fermentation to lactate; (S)-lactate from pyruvate: step 1/1. Its activity is regulated as follows. Allosterically activated by fructose 1,6-bisphosphate (FBP). Its function is as follows. Catalyzes the conversion of lactate to pyruvate. In Moorella thermoacetica (strain ATCC 39073 / JCM 9320), this protein is L-lactate dehydrogenase.